Here is a 475-residue protein sequence, read N- to C-terminus: Bifunctional protein HldE (475 aa).

The tract at residues 1–321 (MADKIDISLY…RALHQITASH (321 aa)) is ribokinase. 197–200 (NLKE) contacts ATP. Residue Asp266 is part of the active site. The interval 346-475 (MTNGCFDILH…TSRLVEKMLN (130 aa)) is cytidylyltransferase.

The protein in the N-terminal section; belongs to the carbohydrate kinase PfkB family. This sequence in the C-terminal section; belongs to the cytidylyltransferase family. Homodimer.

It catalyses the reaction D-glycero-beta-D-manno-heptose 7-phosphate + ATP = D-glycero-beta-D-manno-heptose 1,7-bisphosphate + ADP + H(+). The enzyme catalyses D-glycero-beta-D-manno-heptose 1-phosphate + ATP + H(+) = ADP-D-glycero-beta-D-manno-heptose + diphosphate. The protein operates within nucleotide-sugar biosynthesis; ADP-L-glycero-beta-D-manno-heptose biosynthesis; ADP-L-glycero-beta-D-manno-heptose from D-glycero-beta-D-manno-heptose 7-phosphate: step 1/4. Its pathway is nucleotide-sugar biosynthesis; ADP-L-glycero-beta-D-manno-heptose biosynthesis; ADP-L-glycero-beta-D-manno-heptose from D-glycero-beta-D-manno-heptose 7-phosphate: step 3/4. Its function is as follows. Catalyzes the phosphorylation of D-glycero-D-manno-heptose 7-phosphate at the C-1 position to selectively form D-glycero-beta-D-manno-heptose-1,7-bisphosphate. Catalyzes the ADP transfer from ATP to D-glycero-beta-D-manno-heptose 1-phosphate, yielding ADP-D-glycero-beta-D-manno-heptose. The protein is Bifunctional protein HldE of Coxiella burnetii (strain RSA 331 / Henzerling II).